A 505-amino-acid polypeptide reads, in one-letter code: ATP synthase subunit alpha (505 aa).

171 to 178 (GDRQTGKT) contacts ATP.

It belongs to the ATPase alpha/beta chains family. F-type ATPases have 2 components, CF(1) - the catalytic core - and CF(0) - the membrane proton channel. CF(1) has five subunits: alpha(3), beta(3), gamma(1), delta(1), epsilon(1). CF(0) has three main subunits: a(1), b(2) and c(9-12). The alpha and beta chains form an alternating ring which encloses part of the gamma chain. CF(1) is attached to CF(0) by a central stalk formed by the gamma and epsilon chains, while a peripheral stalk is formed by the delta and b chains.

It is found in the cell inner membrane. The catalysed reaction is ATP + H2O + 4 H(+)(in) = ADP + phosphate + 5 H(+)(out). Its function is as follows. Produces ATP from ADP in the presence of a proton gradient across the membrane. The alpha chain is a regulatory subunit. This is ATP synthase subunit alpha from Aliarcobacter butzleri (strain RM4018) (Arcobacter butzleri).